We begin with the raw amino-acid sequence, 435 residues long: 3-phosphoshikimate 1-carboxyvinyltransferase (435 aa).

Lysine 15, serine 16, and arginine 20 together coordinate 3-phosphoshikimate. A phosphoenolpyruvate-binding site is contributed by lysine 15. Positions 96 and 124 each coordinate phosphoenolpyruvate. 3-phosphoshikimate-binding residues include serine 169, glutamine 171, serine 195, aspartate 318, and lysine 345. Glutamine 171 serves as a coordination point for phosphoenolpyruvate. Aspartate 318 functions as the Proton acceptor in the catalytic mechanism. The phosphoenolpyruvate site is built by arginine 349 and arginine 393.

This sequence belongs to the EPSP synthase family. In terms of assembly, monomer.

It is found in the cytoplasm. The catalysed reaction is 3-phosphoshikimate + phosphoenolpyruvate = 5-O-(1-carboxyvinyl)-3-phosphoshikimate + phosphate. It functions in the pathway metabolic intermediate biosynthesis; chorismate biosynthesis; chorismate from D-erythrose 4-phosphate and phosphoenolpyruvate: step 6/7. In terms of biological role, catalyzes the transfer of the enolpyruvyl moiety of phosphoenolpyruvate (PEP) to the 5-hydroxyl of shikimate-3-phosphate (S3P) to produce enolpyruvyl shikimate-3-phosphate and inorganic phosphate. In Chlorobium chlorochromatii (strain CaD3), this protein is 3-phosphoshikimate 1-carboxyvinyltransferase.